Here is a 388-residue protein sequence, read N- to C-terminus: N-acetylneuraminate epimerase (388 aa).

Residues 1–26 (MFSLIGAKRQAIGIAALAWSTGAVMA) form the signal peptide. Kelch repeat units follow at residues 48 to 92 (MAYV…AAAG), 94 to 147 (KIFA…VGLA), 149 to 186 (GRIA…KLVD), 187 to 232 (SYMG…ATMG), 236 to 285 (FLLV…VAGA), 307 to 356 (ANAA…DAPG), and 358 to 387 (LLVV…LSVE).

It belongs to the NanM family. In terms of assembly, homodimer.

The protein resides in the periplasm. The enzyme catalyses N-acetyl-alpha-neuraminate = N-acetyl-beta-neuraminate. Functionally, converts alpha-N-acetylneuranimic acid (Neu5Ac) to the beta-anomer, accelerating the equilibrium between the alpha- and beta-anomers. Probably facilitates sialidase-negative bacteria to compete successfully for limited amounts of extracellular Neu5Ac, which is likely taken up in the beta-anomer. In addition, the rapid removal of sialic acid from solution might be advantageous to the bacterium to damp down host responses. This chain is N-acetylneuraminate epimerase, found in Brucella suis (strain ATCC 23445 / NCTC 10510).